The following is a 225-amino-acid chain: 2-C-methyl-D-erythritol 4-phosphate cytidylyltransferase (225 aa).

The protein belongs to the IspD/TarI cytidylyltransferase family. IspD subfamily.

It catalyses the reaction 2-C-methyl-D-erythritol 4-phosphate + CTP + H(+) = 4-CDP-2-C-methyl-D-erythritol + diphosphate. It participates in isoprenoid biosynthesis; isopentenyl diphosphate biosynthesis via DXP pathway; isopentenyl diphosphate from 1-deoxy-D-xylulose 5-phosphate: step 2/6. Its function is as follows. Catalyzes the formation of 4-diphosphocytidyl-2-C-methyl-D-erythritol from CTP and 2-C-methyl-D-erythritol 4-phosphate (MEP). The sequence is that of 2-C-methyl-D-erythritol 4-phosphate cytidylyltransferase from Cereibacter sphaeroides (strain ATCC 17029 / ATH 2.4.9) (Rhodobacter sphaeroides).